The sequence spans 943 residues: Neutral alpha-glucosidase AB (943 aa).

Residues 1 to 23 form the signal peptide; it reads MRKLVILIILSIVCSLFIGSIES. The interval 186–231 is disordered; sequence FEPISDKPQPLPPKEKKSEEENKEANQEEDNNNNNNDNNEEQQVST. Positions 198 to 211 are enriched in basic and acidic residues; the sequence is PKEKKSEEENKEAN. D540 (nucleophile) is an active-site residue. Residue E543 is part of the active site. The active-site Proton donor is the D617. N878, N887, and N907 each carry an N-linked (GlcNAc...) asparagine glycan.

This sequence belongs to the glycosyl hydrolase 31 family.

Its subcellular location is the endoplasmic reticulum. The protein localises to the golgi apparatus. It catalyses the reaction N(4)-(alpha-D-Glc-(1-&gt;3)-alpha-D-Man-(1-&gt;2)-alpha-D-Man-(1-&gt;2)-alpha-D-Man-(1-&gt;3)-[alpha-D-Man-(1-&gt;2)-alpha-D-Man-(1-&gt;3)-[alpha-D-Man-(1-&gt;2)-alpha-D-Man-(1-&gt;6)]-alpha-D-Man-(1-&gt;6)]-beta-D-Man-(1-&gt;4)-beta-D-GlcNAc-(1-&gt;4)-beta-D-GlcNAc)-L-asparaginyl-[protein] + H2O = N(4)-(alpha-D-Man-(1-&gt;2)-alpha-D-Man-(1-&gt;2)-alpha-D-Man-(1-&gt;3)-[alpha-D-Man-(1-&gt;2)-alpha-D-Man-(1-&gt;3)-[alpha-D-Man-(1-&gt;2)-alpha-D-Man-(1-&gt;6)]-alpha-D-Man-(1-&gt;6)]-beta-D-Man-(1-&gt;4)-beta-D-GlcNAc-(1-&gt;4)-beta-D-GlcNAc)-L-asparaginyl-[protein] (N-glucan mannose isomer 9A1,2,3B1,2,3) + beta-D-glucose. It carries out the reaction N(4)-(alpha-D-Glc-(1-&gt;3)-alpha-D-Glc-(1-&gt;3)-alpha-D-Man-(1-&gt;2)-alpha-D-Man-(1-&gt;2)-alpha-D-Man-(1-&gt;3)-[alpha-D-Man-(1-&gt;2)-alpha-D-Man-(1-&gt;3)-[alpha-D-Man-(1-&gt;2)-alpha-D-Man-(1-&gt;6)]-alpha-D-Man-(1-&gt;6)]-beta-D-Man-(1-&gt;4)-beta-D-GlcNAc-(1-&gt;4)-beta-D-GlcNAc)-L-asparaginyl-[protein] + H2O = N(4)-(alpha-D-Glc-(1-&gt;3)-alpha-D-Man-(1-&gt;2)-alpha-D-Man-(1-&gt;2)-alpha-D-Man-(1-&gt;3)-[alpha-D-Man-(1-&gt;2)-alpha-D-Man-(1-&gt;3)-[alpha-D-Man-(1-&gt;2)-alpha-D-Man-(1-&gt;6)]-alpha-D-Man-(1-&gt;6)]-beta-D-Man-(1-&gt;4)-beta-D-GlcNAc-(1-&gt;4)-beta-D-GlcNAc)-L-asparaginyl-[protein] + beta-D-glucose. It functions in the pathway glycan metabolism; N-glycan metabolism. In terms of biological role, cleaves sequentially the 2 innermost alpha-1,3-linked glucose residues from N-linked oligosaccharides on newly synthesized glycoproteins. The polypeptide is Neutral alpha-glucosidase AB (modA) (Dictyostelium discoideum (Social amoeba)).